The following is a 681-amino-acid chain: Probable L-type lectin-domain containing receptor kinase VII.2 (681 aa).

A signal peptide spans 1–23; sequence MFSKVSILLFSLASLLLFRSTTG. The segment at 24–260 is legume-lectin like; the sequence is IEFIYNSNFT…SHRILSWSFS (237 aa). The Extracellular segment spans residues 24 to 290; it reads IEFIYNSNFT…SGDSVLKSKG (267 aa). N-linked (GlcNAc...) asparagine glycans are attached at residues Asn-31, Asn-42, Asn-56, Asn-72, Asn-126, Asn-202, Asn-207, Asn-228, and Asn-263. Residues 291–311 traverse the membrane as a helical segment; that stretch reads FIAGVSSGVVLLVSVIGLLCF. Over 312–681 the chain is Cytoplasmic; sequence YVVRRRRQRL…QTYDSILHGR (370 aa). Residues 349-624 enclose the Protein kinase domain; sequence FSDENMIGYG…VVQILEQGRL (276 aa). ATP is bound by residues 355–363 and Lys-376; that span reads IGYGGNSKV. The active-site Proton acceptor is the Asp-475.

In the C-terminal section; belongs to the protein kinase superfamily. Ser/Thr protein kinase family. This sequence in the N-terminal section; belongs to the leguminous lectin family.

Its subcellular location is the cell membrane. The enzyme catalyses L-seryl-[protein] + ATP = O-phospho-L-seryl-[protein] + ADP + H(+). The catalysed reaction is L-threonyl-[protein] + ATP = O-phospho-L-threonyl-[protein] + ADP + H(+). The polypeptide is Probable L-type lectin-domain containing receptor kinase VII.2 (LECRK72) (Arabidopsis thaliana (Mouse-ear cress)).